We begin with the raw amino-acid sequence, 394 residues long: Ribulose bisphosphate carboxylase large chain (394 aa).

Residue K5 is modified to N6,N6,N6-trimethyllysine. Substrate-binding residues include N114 and T164. K166 serves as the catalytic Proton acceptor. Residue K168 participates in substrate binding. Residues K192, D194, and E195 each coordinate Mg(2+). At K192 the chain carries N6-carboxylysine. Catalysis depends on H285, which acts as the Proton acceptor. Residues R286, H318, and S370 each coordinate substrate.

The protein belongs to the RuBisCO large chain family. Type I subfamily. As to quaternary structure, heterohexadecamer of 8 large chains and 8 small chains; disulfide-linked. The disulfide link is formed within the large subunit homodimers. Mg(2+) is required as a cofactor. The disulfide bond which can form in the large chain dimeric partners within the hexadecamer appears to be associated with oxidative stress and protein turnover.

It localises to the plastid. Its subcellular location is the chloroplast. The enzyme catalyses 2 (2R)-3-phosphoglycerate + 2 H(+) = D-ribulose 1,5-bisphosphate + CO2 + H2O. It carries out the reaction D-ribulose 1,5-bisphosphate + O2 = 2-phosphoglycolate + (2R)-3-phosphoglycerate + 2 H(+). In terms of biological role, ruBisCO catalyzes two reactions: the carboxylation of D-ribulose 1,5-bisphosphate, the primary event in carbon dioxide fixation, as well as the oxidative fragmentation of the pentose substrate in the photorespiration process. Both reactions occur simultaneously and in competition at the same active site. The protein is Ribulose bisphosphate carboxylase large chain (rbcL) of Alisma plantago-aquatica (Common water-plantain).